Here is a 210-residue protein sequence, read N- to C-terminus: Ribosomal RNA large subunit methyltransferase E (210 aa).

S-adenosyl-L-methionine is bound by residues G67, W69, D87, D103, and D128. Catalysis depends on K168, which acts as the Proton acceptor.

The protein belongs to the class I-like SAM-binding methyltransferase superfamily. RNA methyltransferase RlmE family.

It localises to the cytoplasm. It catalyses the reaction uridine(2552) in 23S rRNA + S-adenosyl-L-methionine = 2'-O-methyluridine(2552) in 23S rRNA + S-adenosyl-L-homocysteine + H(+). Its function is as follows. Specifically methylates the uridine in position 2552 of 23S rRNA at the 2'-O position of the ribose in the fully assembled 50S ribosomal subunit. The sequence is that of Ribosomal RNA large subunit methyltransferase E from Psychrobacter sp. (strain PRwf-1).